The primary structure comprises 424 residues: Calreticulin-3 (424 aa).

Positions 1-28 are cleaved as a signal peptide; the sequence is MGLPQNKLSFFCFFFLVSVLTLAPLAFS. An N-linked (GlcNAc...) asparagine glycan is attached at Asn-97. A disulfide bond links Cys-114 and Cys-146. An alpha-D-glucoside contacts are provided by Tyr-118, Lys-120, Tyr-137, and Asp-144. A run of 7 repeats spans residues 200 to 211, 219 to 230, 236 to 247, 254 to 265, 269 to 279, 283 to 293, and 297 to 307. Residues 200 to 265 are 4 X approximate repeats; the sequence is REFGSMYTDW…KAKEPEDWDE (66 aa). The segment covering 228–237 has biased composition (acidic residues); that stretch reads WDDREYIDDP. A disordered region spans residues 228-275; that stretch reads WDDREYIDDPNDVKPEGFDSIPREIPDRKAKEPEDWDEEENGLWEPPK. The segment covering 238-260 has biased composition (basic and acidic residues); sequence NDVKPEGFDSIPREIPDRKAKEP. The segment at 269 to 307 is 3 X approximate repeats; the sequence is GLWEPPKIPNSAYKGPWKAKRIKNPNYKGKWKNPWIDNP. Residue Glu-327 coordinates an alpha-D-glucoside. Residues 368 to 401 show a composition bias toward basic and acidic residues; it reads FAEAEKERKAREDEEARIAREEGERRRKERDHRY. Positions 368 to 424 are disordered; that stretch reads FAEAEKERKAREDEEARIAREEGERRRKERDHRYGDRRRRYKRPNPRDYMDDYHDEL. The span at 402 to 411 shows a compositional bias: basic residues; that stretch reads GDRRRRYKRP. A compositionally biased stretch (basic and acidic residues) spans 412–424; the sequence is NPRDYMDDYHDEL. Positions 421–424 match the Prevents secretion from ER motif; it reads HDEL.

It belongs to the calreticulin family.

Its subcellular location is the endoplasmic reticulum lumen. In terms of biological role, molecular calcium-binding chaperone promoting folding, oligomeric assembly and quality control in the ER via the calreticulin/calnexin cycle. This lectin may interact transiently with almost all of the monoglucosylated glycoproteins that are synthesized in the ER. Required for elongation factor Tu receptor (EFR) accumulation and for EFR, but not flagellin-sensing 2 (FLS2) signaling. This is Calreticulin-3 (CRT3) from Arabidopsis thaliana (Mouse-ear cress).